Reading from the N-terminus, the 314-residue chain is Pantothenate synthetase (314 aa).

Met-43 to His-50 lines the ATP pocket. Catalysis depends on His-50, which acts as the Proton donor. Gln-75 provides a ligand contact to (R)-pantoate. Gln-75 serves as a coordination point for beta-alanine. The segment at Met-112–Glu-131 is disordered. ATP is bound at residue Gly-161 to Asp-164. A (R)-pantoate-binding site is contributed by Gln-167. Residues Val-190 and Leu-198–Arg-201 contribute to the ATP site.

The protein belongs to the pantothenate synthetase family. As to quaternary structure, homodimer.

The protein localises to the cytoplasm. It catalyses the reaction (R)-pantoate + beta-alanine + ATP = (R)-pantothenate + AMP + diphosphate + H(+). Its pathway is cofactor biosynthesis; (R)-pantothenate biosynthesis; (R)-pantothenate from (R)-pantoate and beta-alanine: step 1/1. In terms of biological role, catalyzes the condensation of pantoate with beta-alanine in an ATP-dependent reaction via a pantoyl-adenylate intermediate. In Mycolicibacterium smegmatis (strain ATCC 700084 / mc(2)155) (Mycobacterium smegmatis), this protein is Pantothenate synthetase.